A 576-amino-acid polypeptide reads, in one-letter code: Protein O-linked-mannose beta-1,4-N-acetylglucosaminyltransferase 2 (576 aa).

Residues M1 to S4 lie on the Cytoplasmic side of the membrane. A helical; Signal-anchor for type II membrane protein transmembrane segment spans residues A5–L25. The Lumenal segment spans residues L26 to T576. Residues N98, N275, N335, N451, N539, and N561 are each glycosylated (N-linked (GlcNAc...) asparagine). Positions R482–T576 constitute a Fibronectin type-III domain.

This sequence belongs to the glycosyltransferase 61 family.

It localises to the endoplasmic reticulum membrane. The enzyme catalyses 3-O-(alpha-D-mannosyl)-L-threonyl-[protein] + UDP-N-acetyl-alpha-D-glucosamine = 3-O-(N-acetyl-beta-D-glucosaminyl-(1-&gt;4)-alpha-D-mannosyl)-L-threonyl-[protein] + UDP + H(+). The protein operates within protein modification; protein glycosylation. Its function is as follows. O-linked mannose beta-1,4-N-acetylglucosaminyltransferase that transfers UDP-N-acetyl-D-glucosamine to the 4-position of the mannose to generate N-acetyl-D-glucosamine-beta-1,4-O-D-mannosylprotein. Involved in the biosynthesis of the phosphorylated O-mannosyl trisaccharide (N-acetylgalactosamine-beta-3-N-acetylglucosamine-beta-4-(phosphate-6-)mannose), a carbohydrate structure present in alpha-dystroglycan (DAG1), which is required for binding laminin G-like domain-containing extracellular proteins with high affinity. The polypeptide is Protein O-linked-mannose beta-1,4-N-acetylglucosaminyltransferase 2 (pomgnt2) (Xenopus tropicalis (Western clawed frog)).